Here is a 311-residue protein sequence, read N- to C-terminus: Probable lipid kinase YegS-like (311 aa).

Positions 9–140 (EHDGDTWLIL…VDVGTLGDDY (132 aa)) constitute a DAGKc domain. ATP is bound by residues Thr47, 73 to 79 (GDGTVNE), and Ser102. Positions 221, 224, and 226 each coordinate Mg(2+). The active-site Proton acceptor is the Glu281.

It belongs to the diacylglycerol/lipid kinase family. YegS lipid kinase subfamily. Mg(2+) serves as cofactor. Ca(2+) is required as a cofactor.

The protein resides in the cytoplasm. In terms of biological role, probably phosphorylates lipids; the in vivo substrate is unknown. This is Probable lipid kinase YegS-like from Chromohalobacter salexigens (strain ATCC BAA-138 / DSM 3043 / CIP 106854 / NCIMB 13768 / 1H11).